Reading from the N-terminus, the 281-residue chain is Ribosomal RNA small subunit methyltransferase A (281 aa).

Positions 21, 23, 48, 69, 92, and 113 each coordinate S-adenosyl-L-methionine.

The protein belongs to the class I-like SAM-binding methyltransferase superfamily. rRNA adenine N(6)-methyltransferase family. RsmA subfamily.

It is found in the cytoplasm. The catalysed reaction is adenosine(1518)/adenosine(1519) in 16S rRNA + 4 S-adenosyl-L-methionine = N(6)-dimethyladenosine(1518)/N(6)-dimethyladenosine(1519) in 16S rRNA + 4 S-adenosyl-L-homocysteine + 4 H(+). Its function is as follows. Specifically dimethylates two adjacent adenosines (A1518 and A1519) in the loop of a conserved hairpin near the 3'-end of 16S rRNA in the 30S particle. May play a critical role in biogenesis of 30S subunits. The sequence is that of Ribosomal RNA small subunit methyltransferase A from Ralstonia nicotianae (strain ATCC BAA-1114 / GMI1000) (Ralstonia solanacearum).